Here is a 423-residue protein sequence, read N- to C-terminus: UDP-N-acetylglucosamine 1-carboxyvinyltransferase 2 (423 aa).

Position 23–24 (Lys23–Asn24) interacts with phosphoenolpyruvate. Arg96 is a UDP-N-acetyl-alpha-D-glucosamine binding site. Residue Cys120 is the Proton donor of the active site. Cys120 is subject to 2-(S-cysteinyl)pyruvic acid O-phosphothioketal. UDP-N-acetyl-alpha-D-glucosamine is bound by residues Arg125 to Leu129, Asp309, and Val331.

It belongs to the EPSP synthase family. MurA subfamily.

Its subcellular location is the cytoplasm. The enzyme catalyses phosphoenolpyruvate + UDP-N-acetyl-alpha-D-glucosamine = UDP-N-acetyl-3-O-(1-carboxyvinyl)-alpha-D-glucosamine + phosphate. It functions in the pathway cell wall biogenesis; peptidoglycan biosynthesis. In terms of biological role, cell wall formation. Adds enolpyruvyl to UDP-N-acetylglucosamine. In Streptococcus agalactiae serotype III (strain NEM316), this protein is UDP-N-acetylglucosamine 1-carboxyvinyltransferase 2.